A 203-amino-acid chain; its full sequence is Flagellar transcriptional regulator FlhC (203 aa).

Zn(2+)-binding residues include cysteine 161, cysteine 164, cysteine 181, and cysteine 184.

The protein belongs to the FlhC family. Heterohexamer composed of two FlhC and four FlhD subunits. Each FlhC binds a FlhD dimer, forming a heterotrimer, and a hexamer assembles by dimerization of two heterotrimers. Zn(2+) is required as a cofactor.

Its subcellular location is the cytoplasm. In terms of biological role, functions in complex with FlhD as a master transcriptional regulator that regulates transcription of several flagellar and non-flagellar operons by binding to their promoter region. Activates expression of class 2 flagellar genes, including fliA, which is a flagellum-specific sigma factor that turns on the class 3 genes. Also regulates genes whose products function in a variety of physiological pathways. This chain is Flagellar transcriptional regulator FlhC, found in Cupriavidus necator (strain ATCC 17699 / DSM 428 / KCTC 22496 / NCIMB 10442 / H16 / Stanier 337) (Ralstonia eutropha).